The following is a 509-amino-acid chain: ATP synthase subunit alpha (509 aa).

169–176 (GDRQTGKT) lines the ATP pocket.

Belongs to the ATPase alpha/beta chains family. As to quaternary structure, F-type ATPases have 2 components, CF(1) - the catalytic core - and CF(0) - the membrane proton channel. CF(1) has five subunits: alpha(3), beta(3), gamma(1), delta(1), epsilon(1). CF(0) has four main subunits: a(1), b(1), b'(1) and c(9-12).

It is found in the cellular chromatophore membrane. It carries out the reaction ATP + H2O + 4 H(+)(in) = ADP + phosphate + 5 H(+)(out). Its function is as follows. Produces ATP from ADP in the presence of a proton gradient across the membrane. The alpha chain is a regulatory subunit. The chain is ATP synthase subunit alpha from Rhodobacter capsulatus (Rhodopseudomonas capsulata).